Consider the following 527-residue polypeptide: Glucose-6-phosphate isomerase (527 aa).

E323 acts as the Proton donor in catalysis. Active-site residues include H352 and K454.

Belongs to the GPI family.

The protein resides in the cytoplasm. The catalysed reaction is alpha-D-glucose 6-phosphate = beta-D-fructose 6-phosphate. It participates in carbohydrate biosynthesis; gluconeogenesis. The protein operates within carbohydrate degradation; glycolysis; D-glyceraldehyde 3-phosphate and glycerone phosphate from D-glucose: step 2/4. Functionally, catalyzes the reversible isomerization of glucose-6-phosphate to fructose-6-phosphate. The protein is Glucose-6-phosphate isomerase of Prochlorococcus marinus (strain MIT 9515).